Here is a 510-residue protein sequence, read N- to C-terminus: NAD(P)H-quinone oxidoreductase subunit 2 A, chloroplastic (510 aa).

The next 12 membrane-spanning stretches (helical) occupy residues 24 to 44 (LLLFNGSFIFPECILIFGLIL), 59 to 79 (WFYFISSTCLVISITALLFRW), 99 to 119 (IFQFLILLCSTLCIPLSVEYI), 124 to 144 (MAITEFLLFVLTATLGGMFLC), 149 to 169 (LITIFVAPECFSLCSYLLSGY), 183 to 203 (YLLMGGAGSSILVHGFSWLYG), 229 to 249 (ISLALISITVGLGFKLSPAPF), 295 to 315 (WHLLLEILAILSMILGNLLAI), 323 to 343 (MLAYSSIGQIGYVIIGIIVGD), 354 to 374 (YMLFYISMNLGTFACIVLFGL), 395 to 415 (ALSLALCLLSLGGLPPLAGFF), and 418 to 438 (LYLFWCGWQAGLYFLVSIGLL).

The protein belongs to the complex I subunit 2 family. In terms of assembly, NDH is composed of at least 16 different subunits, 5 of which are encoded in the nucleus.

It is found in the plastid. Its subcellular location is the chloroplast thylakoid membrane. It catalyses the reaction a plastoquinone + NADH + (n+1) H(+)(in) = a plastoquinol + NAD(+) + n H(+)(out). The catalysed reaction is a plastoquinone + NADPH + (n+1) H(+)(in) = a plastoquinol + NADP(+) + n H(+)(out). In terms of biological role, NDH shuttles electrons from NAD(P)H:plastoquinone, via FMN and iron-sulfur (Fe-S) centers, to quinones in the photosynthetic chain and possibly in a chloroplast respiratory chain. The immediate electron acceptor for the enzyme in this species is believed to be plastoquinone. Couples the redox reaction to proton translocation, and thus conserves the redox energy in a proton gradient. The sequence is that of NAD(P)H-quinone oxidoreductase subunit 2 A, chloroplastic from Triticum aestivum (Wheat).